A 212-amino-acid polypeptide reads, in one-letter code: MNLLIMGLPGAGKGTQAAKIVEEFGVAHISTGDMFRAAMANQTEMGRLAKSYIDKGELVPDEVTNGIVKERLAEDDIAEKGFLLDGYPRTIEQAHALDATLEELGLRLDGVINIKVDPSCLVERLSGRIINRKTGETFHKVFNPPVDYKEEDYYQREDDKPETVKRRLDVNMAQEEPILEHYRKLDLVTDIEGNQEITDVFADVEKALLELK.

ATP is bound at residue 10–15; sequence GAGKGT. The interval 30–59 is NMP; that stretch reads STGDMFRAAMANQTEMGRLAKSYIDKGELV. AMP is bound by residues Thr-31, Arg-36, 57–59, 86–89, and Gln-93; these read ELV and GYPR. An LID region spans residues 127–159; that stretch reads GRIINRKTGETFHKVFNPPVDYKEEDYYQREDD. Residues Arg-128 and 137 to 138 each bind ATP; that span reads TF. Positions 156 and 167 each coordinate AMP. Gln-195 is a binding site for ATP.

Monomer.

The protein resides in the cytoplasm. The enzyme catalyses AMP + ATP = 2 ADP. It participates in purine metabolism; AMP biosynthesis via salvage pathway; AMP from ADP: step 1/1. Its function is as follows. Catalyzes the reversible transfer of the terminal phosphate group between ATP and AMP. Plays an important role in cellular energy homeostasis and in adenine nucleotide metabolism. This chain is Adenylate kinase, found in Streptococcus pyogenes serotype M6 (strain ATCC BAA-946 / MGAS10394).